A 702-amino-acid chain; its full sequence is Arylphorin (702 aa).

Positions 1–16 (MQTVLFLAALVSLAAA) are cleaved as a signal peptide. N-linked (GlcNAc...) asparagine glycosylation is found at N211 and N481.

Belongs to the hemocyanin family. As to expression, hemolymph.

The protein localises to the secreted. Larval storage protein (LSP) which may serve as a store of amino acids for synthesis of adult proteins. Binds the A.niger cell wall component alpha-1,3-glucan, a fungal pathogen-associated molecular pattern (PAMP) that activates the host immune response. The chain is Arylphorin (LOC113516268) from Galleria mellonella (Greater wax moth).